The primary structure comprises 172 residues: Large ribosomal subunit protein uL10 (172 aa).

The protein belongs to the universal ribosomal protein uL10 family. In terms of assembly, part of the ribosomal stalk of the 50S ribosomal subunit. The N-terminus interacts with L11 and the large rRNA to form the base of the stalk. The C-terminus forms an elongated spine to which L12 dimers bind in a sequential fashion forming a multimeric L10(L12)X complex.

In terms of biological role, forms part of the ribosomal stalk, playing a central role in the interaction of the ribosome with GTP-bound translation factors. This is Large ribosomal subunit protein uL10 (rplJ) from Chlamydia trachomatis serovar D (strain ATCC VR-885 / DSM 19411 / UW-3/Cx).